The chain runs to 1056 residues: Carbamoyl phosphate synthase large chain (1056 aa).

The tract at residues 1–397 (MPKKSHIKKV…AFKKALRSLD (397 aa)) is carboxyphosphate synthetic domain. 12 residues coordinate ATP: arginine 127, arginine 167, glycine 173, glycine 174, glutamate 206, valine 208, glutamate 213, glycine 239, isoleucine 240, histidine 241, glutamine 282, and glutamate 294. Residues 131–323 (RDLMNAIGEP…IARVAAKIAI (193 aa)) enclose the ATP-grasp 1 domain. Mg(2+) is bound by residues glutamine 282, glutamate 294, and asparagine 296. Residues glutamine 282, glutamate 294, and asparagine 296 each contribute to the Mn(2+) site. Residues 398–530 (NDMQQHTNPS…YSTWEEGCEL (133 aa)) are oligomerization domain. The carbamoyl phosphate synthetic domain stretch occupies residues 531–920 (VRDSAKKVLI…YKACTAADNT (390 aa)). Positions 662–853 (SRLLTRLEIP…LAKIAAKVMV (192 aa)) constitute an ATP-grasp 2 domain. Residues arginine 698, serine 737, leucine 739, glutamate 744, glycine 769, valine 770, histidine 771, serine 772, glutamine 812, and glutamate 824 each contribute to the ATP site. 3 residues coordinate Mg(2+): glutamine 812, glutamate 824, and asparagine 826. Residues glutamine 812, glutamate 824, and asparagine 826 each coordinate Mn(2+). The MGS-like domain occupies 919-1056 (NTLPTTGNVF…EPLGHYHGLM (138 aa)). The segment at 921–1056 (LPTTGNVFIS…EPLGHYHGLM (136 aa)) is allosteric domain.

Belongs to the CarB family. In terms of assembly, composed of two chains; the small (or glutamine) chain promotes the hydrolysis of glutamine to ammonia, which is used by the large (or ammonia) chain to synthesize carbamoyl phosphate. Tetramer of heterodimers (alpha,beta)4. The cofactor is Mg(2+). It depends on Mn(2+) as a cofactor.

It carries out the reaction hydrogencarbonate + L-glutamine + 2 ATP + H2O = carbamoyl phosphate + L-glutamate + 2 ADP + phosphate + 2 H(+). The enzyme catalyses hydrogencarbonate + NH4(+) + 2 ATP = carbamoyl phosphate + 2 ADP + phosphate + 2 H(+). The protein operates within amino-acid biosynthesis; L-arginine biosynthesis; carbamoyl phosphate from bicarbonate: step 1/1. It participates in pyrimidine metabolism; UMP biosynthesis via de novo pathway; (S)-dihydroorotate from bicarbonate: step 1/3. In terms of biological role, large subunit of the glutamine-dependent carbamoyl phosphate synthetase (CPSase). CPSase catalyzes the formation of carbamoyl phosphate from the ammonia moiety of glutamine, carbonate, and phosphate donated by ATP, constituting the first step of 2 biosynthetic pathways, one leading to arginine and/or urea and the other to pyrimidine nucleotides. The large subunit (synthetase) binds the substrates ammonia (free or transferred from glutamine from the small subunit), hydrogencarbonate and ATP and carries out an ATP-coupled ligase reaction, activating hydrogencarbonate by forming carboxy phosphate which reacts with ammonia to form carbamoyl phosphate. In Methanoculleus marisnigri (strain ATCC 35101 / DSM 1498 / JR1), this protein is Carbamoyl phosphate synthase large chain.